A 238-amino-acid polypeptide reads, in one-letter code: Orotate phosphoribosyltransferase (238 aa).

Lysine 29 lines the 5-phospho-alpha-D-ribose 1-diphosphate pocket. Phenylalanine 37–phenylalanine 38 serves as a coordination point for orotate. 5-phospho-alpha-D-ribose 1-diphosphate-binding positions include tyrosine 87 to lysine 88, arginine 118, lysine 119, lysine 122, histidine 124, and aspartate 144 to alanine 152. Positions 148 and 176 each coordinate orotate.

This sequence belongs to the purine/pyrimidine phosphoribosyltransferase family. PyrE subfamily. In terms of assembly, homodimer.

The catalysed reaction is orotidine 5'-phosphate + diphosphate = orotate + 5-phospho-alpha-D-ribose 1-diphosphate. It participates in pyrimidine metabolism; UMP biosynthesis via de novo pathway; UMP from orotate: step 1/2. Catalyzes the transfer of a ribosyl phosphate group from 5-phosphoribose 1-diphosphate to orotate, leading to the formation of orotidine monophosphate (OMP). In Coccidioides immitis (strain RS) (Valley fever fungus), this protein is Orotate phosphoribosyltransferase (URA5).